The primary structure comprises 103 residues: Large ribosomal subunit protein bL21 (103 aa).

The protein belongs to the bacterial ribosomal protein bL21 family. In terms of assembly, part of the 50S ribosomal subunit. Contacts protein L20.

This protein binds to 23S rRNA in the presence of protein L20. This Pectobacterium atrosepticum (strain SCRI 1043 / ATCC BAA-672) (Erwinia carotovora subsp. atroseptica) protein is Large ribosomal subunit protein bL21.